Here is a 228-residue protein sequence, read N- to C-terminus: 6-carboxyhexanoate--CoA ligase (228 aa).

Belongs to the BioW family. As to quaternary structure, homodimer. Mg(2+) is required as a cofactor.

The catalysed reaction is heptanedioate + ATP + CoA = 6-carboxyhexanoyl-CoA + AMP + diphosphate. It functions in the pathway metabolic intermediate metabolism; pimeloyl-CoA biosynthesis; pimeloyl-CoA from pimelate: step 1/1. Functionally, catalyzes the transformation of pimelate into pimeloyl-CoA with concomitant hydrolysis of ATP to AMP. This chain is 6-carboxyhexanoate--CoA ligase, found in Staphylococcus epidermidis (strain ATCC 12228 / FDA PCI 1200).